The chain runs to 527 residues: Zinc finger CCCH-type with G patch domain-containing protein (527 aa).

Residues 97–126 (GEVSGSSSDMREREDEREEEDDGEVEGEVD) are disordered. A compositionally biased stretch (acidic residues) spans 111-125 (DEREEEDDGEVEGEV). The C3H1-type zinc-finger motif lies at 173 to 200 (QKSMKPCPFFLEDKCRFADNCRFSHGEV). The tract at residues 268-312 (LREDDLPSCSDSEDDDNGEGEAAFPRVLTQEEDWAPSRSSSAFGG) is disordered. One can recognise a G-patch domain in the interval 317–363 (TRGIGSKLMLKMGYEYGKGLGKTSEGRVEPVLAVVLPKGKSLDQCAE). Disordered regions lie at residues 369-396 (TQRK…AHNT), 410-444 (LGNG…YKGG), and 505-527 (KAQE…MTEF). The segment covering 384–393 (RNKRTRKARA) has biased composition (basic residues). Basic and acidic residues predominate over residues 511 to 527 (AQRENRKADTHKKMTEF).

Its subcellular location is the nucleus. Functionally, transcription repressor that specifically binds the 5'-GGAG[GA]A[GA]A-3' consensus sequence. Represses transcription by recruiting the chromatin multiprotein complex NuRD to target promoters. Negatively regulates expression of EGFR, a gene involved in cell proliferation, survival and migration. This Salmo salar (Atlantic salmon) protein is Zinc finger CCCH-type with G patch domain-containing protein (zgpat).